The primary structure comprises 281 residues: Probable feruloyl esterase A (281 aa).

An N-terminal signal peptide occupies residues 1–21 (MKQFSAKFALALSAAAGQALA). Disulfide bonds link cysteine 50–cysteine 279, cysteine 112–cysteine 115, and cysteine 248–cysteine 255. Position 98 (aspartate 98) interacts with substrate. Asparagine 100 carries an N-linked (GlcNAc...) asparagine glycan. Tyrosine 101 contributes to the substrate binding site. Serine 154 (nucleophile) is an active-site residue. Asparagine 173 is a glycosylation site (N-linked (GlcNAc...) asparagine). The Charge relay system role is filled by aspartate 215. Histidine 268 is a binding site for substrate. Histidine 268 (charge relay system) is an active-site residue.

It belongs to the AB hydrolase superfamily. FaeA family.

The protein localises to the secreted. It catalyses the reaction feruloyl-polysaccharide + H2O = ferulate + polysaccharide.. Functionally, involved in degradation of plant cell walls. Hydrolyzes the feruloyl-arabinose ester bond in arabinoxylans, and the feruloyl-galactose ester bond in pectin. The chain is Probable feruloyl esterase A (faeA) from Aspergillus terreus (strain NIH 2624 / FGSC A1156).